Reading from the N-terminus, the 215-residue chain is Probable phosphoglycerate mutase GpmB (215 aa).

Substrate contacts are provided by residues Arg8–Asn15, Gln21–Gly22, Arg58, Lys60, Glu82–Met85, Arg104–Arg105, and Gly151–Ile152. The active-site Tele-phosphohistidine intermediate is the His9. Residue Glu82 is the Proton donor/acceptor of the active site.

It belongs to the phosphoglycerate mutase family. GpmB subfamily.

It carries out the reaction (2R)-2-phosphoglycerate = (2R)-3-phosphoglycerate. The protein operates within carbohydrate degradation; glycolysis; pyruvate from D-glyceraldehyde 3-phosphate: step 3/5. The sequence is that of Probable phosphoglycerate mutase GpmB from Salmonella agona (strain SL483).